The primary structure comprises 415 residues: Dynein assembly factor with WD repeat domains 1 (415 aa).

WD repeat units follow at residues 90-129, 132-174, 175-214, 217-256, 259-298, 301-340, 343-384, and 386-415; these read AHIL…ELHT, GHRN…HTFR, GHTA…EALT, GHAA…RIHT, GHRG…CVAT, GHDD…CLAK, GHEG…QVLK, and HTDE…RIWR.

The protein belongs to the WD repeat WDR69 family.

It localises to the cytoplasm. It is found in the cytoskeleton. The protein localises to the flagellum basal body. The protein resides in the flagellum axoneme. Functionally, required for axonemal dynein assembly and ciliary motility in ciliated organs, including Kupffer's vesicle, during embryogenesis. Facilitates the onset of robust cilia motility during development. In Xenopus laevis (African clawed frog), this protein is Dynein assembly factor with WD repeat domains 1 (daw1).